The following is a 393-amino-acid chain: Thermostable carboxypeptidase 1 (393 aa).

His-104, Asp-109, and His-245 together coordinate Zn(2+). Tyr-302 functions as the Proton donor in the catalytic mechanism. The active-site Nucleophile is the Glu-373.

Belongs to the peptidase M20 family. As to quaternary structure, homotetramer. Requires Zn(2+) as cofactor.

Functionally, can release basic, acidic, aromatic, and, to a lesser extent, aliphatic amino acids. The polypeptide is Thermostable carboxypeptidase 1 (cpsA1) (Saccharolobus solfataricus (strain ATCC 35092 / DSM 1617 / JCM 11322 / P2) (Sulfolobus solfataricus)).